Reading from the N-terminus, the 701-residue chain is Elongation factor G (701 aa).

Positions K6 to L286 constitute a tr-type G domain. GTP contacts are provided by residues A15–T22, D83–H87, and N137–D140.

This sequence belongs to the TRAFAC class translation factor GTPase superfamily. Classic translation factor GTPase family. EF-G/EF-2 subfamily.

Its subcellular location is the cytoplasm. Its function is as follows. Catalyzes the GTP-dependent ribosomal translocation step during translation elongation. During this step, the ribosome changes from the pre-translocational (PRE) to the post-translocational (POST) state as the newly formed A-site-bound peptidyl-tRNA and P-site-bound deacylated tRNA move to the P and E sites, respectively. Catalyzes the coordinated movement of the two tRNA molecules, the mRNA and conformational changes in the ribosome. This Cytophaga hutchinsonii (strain ATCC 33406 / DSM 1761 / CIP 103989 / NBRC 15051 / NCIMB 9469 / D465) protein is Elongation factor G.